The following is a 382-amino-acid chain: Anhydro-N-acetylmuramic acid kinase (382 aa).

9-16 lines the ATP pocket; sequence GTSLDGID.

This sequence belongs to the anhydro-N-acetylmuramic acid kinase family.

The enzyme catalyses 1,6-anhydro-N-acetyl-beta-muramate + ATP + H2O = N-acetyl-D-muramate 6-phosphate + ADP + H(+). The protein operates within amino-sugar metabolism; 1,6-anhydro-N-acetylmuramate degradation. It participates in cell wall biogenesis; peptidoglycan recycling. Catalyzes the specific phosphorylation of 1,6-anhydro-N-acetylmuramic acid (anhMurNAc) with the simultaneous cleavage of the 1,6-anhydro ring, generating MurNAc-6-P. Is required for the utilization of anhMurNAc either imported from the medium or derived from its own cell wall murein, and thus plays a role in cell wall recycling. This is Anhydro-N-acetylmuramic acid kinase from Bacillus cereus (strain 03BB102).